The following is an 860-amino-acid chain: Eukaryotic translation initiation factor 3 subunit C (860 aa).

Positions Met-1 to Val-76 are disordered. Over residues Ser-10–Asp-51 the composition is skewed to acidic residues. In terms of domain architecture, PCI spans Phe-599 to Glu-773. A disordered region spans residues Arg-812 to Ala-860. A compositionally biased stretch (gly residues) spans Gly-817–Arg-831. Residues Gly-832 to Gly-846 are compositionally biased toward low complexity. Gly residues predominate over residues Gln-847–Ala-860.

Belongs to the eIF-3 subunit C family. In terms of assembly, component of the eukaryotic translation initiation factor 3 (eIF-3) complex.

The protein localises to the cytoplasm. In terms of biological role, component of the eukaryotic translation initiation factor 3 (eIF-3) complex, which is involved in protein synthesis of a specialized repertoire of mRNAs and, together with other initiation factors, stimulates binding of mRNA and methionyl-tRNAi to the 40S ribosome. The eIF-3 complex specifically targets and initiates translation of a subset of mRNAs involved in cell proliferation. This Emericella nidulans (strain FGSC A4 / ATCC 38163 / CBS 112.46 / NRRL 194 / M139) (Aspergillus nidulans) protein is Eukaryotic translation initiation factor 3 subunit C (nip1).